The sequence spans 2089 residues: Rho GTPase-activating protein 32 (2089 aa).

The disordered stretch occupies residues 24-52 (TQLTDGDEEEREESFRKMKSSIHSEEDDF). One can recognise a PX; atypical domain in the interval 131–245 (GSIQLSLSEE…LTWMEIDNKG (115 aa)). In terms of domain architecture, SH3 spans 259–321 (PAVGAAHVIK…PGHCVELINQ (63 aa)). Positions 372 to 567 (CDLGEHLLNS…FILNHVDVLF (196 aa)) constitute a Rho-GAP domain. Residues Ser706, Ser709, Ser732, and Ser738 each carry the phosphoserine modification. Basic and acidic residues predominate over residues 828–837 (KLSPSKKDAE). Positions 828 to 858 (KLSPSKKDAEAGGSQSQTPGSTASSEPVSPV) are disordered. Polar residues predominate over residues 840–854 (GSQSQTPGSTASSEP). Phosphoserine occurs at positions 852, 856, 892, and 952. Disordered regions lie at residues 955–1037 (QLQL…PPPP), 1119–1141 (CNQPLPEAAAMGGPTQSNTTDSG), and 1154–1197 (LHRN…SVST). 2 stretches are compositionally biased toward polar residues: residues 998–1014 (LSSQSKAVPSGQSQTGA) and 1132–1141 (PTQSNTTDSG). The span at 1175–1191 (DSEKSDDHGSFPEDHAG) shows a compositional bias: basic and acidic residues. Position 1206 is a phosphoserine (Ser1206). Residues 1221–1368 (GTSVDKPHHS…GDPAPIFLSD (148 aa)) form a disordered region. Residues 1225 to 1235 (DKPHHSSELTD) show a composition bias toward basic and acidic residues. Low complexity predominate over residues 1262-1275 (TATMAYMMATPARA). The segment at 1395-1714 (RAPPLHLRAE…YNYAGLPPRP (320 aa)) is interaction with GAB2. Residues Arg1526 and Arg1536 each carry the asymmetric dimethylarginine modification. Position 1588 is a phosphoserine (Ser1588). The segment at 1688-2089 (SSRDFAFYNP…PHPDTQIHAE (402 aa)) is interaction with FYN. Disordered stretches follow at residues 1801–1865 (PGKT…QSSL) and 1881–2002 (RAHQ…LERD). Residues 1826 to 1841 (GDERFYRKHPESEFDR) show a composition bias toward basic and acidic residues. The span at 1850–1865 (STQAEKPSLPQKQSSL) shows a compositional bias: polar residues. Over residues 1881-1892 (RAHQEASHRQLC) the composition is skewed to basic and acidic residues. The segment covering 1918–1939 (SEPSNYHNSGKYMTSGQGSLTL) has biased composition (polar residues). Basic and acidic residues-rich tracts occupy residues 1940–1954 (NHKEVRLPKDLDRPR) and 1961–1975 (PEKHSRDCYKEEEHF). Residue Arg2039 is modified to Omega-N-methylarginine.

Belongs to the PX domain-containing GAP family. Interacts with NTRK1 (via cytoplasmic domain); the interaction is independent of the phosphorylation state of NTRK1. Interacts with SHC3 (via SH2 domain). Interacts with RASA1 (via SH3 domain); the interaction is necessary for the Ras activation and cell transforming activities of ARHGAP32. Interacts with GAB1 and GAB2. Interacts with CRK and CRKL. Found in a complex with CRKL and BCAR1; upon EGF stimulation BCAR1 may be replaced by EGFR. Interacts with NCK1 (via SH3 domain); NCK1 recruits phosphorylated BCAR1 to the complex. Isoform 2 interacts with FYN; the interaction appears to be dependent on tyrosine phosphorylation of ARHGAP32. Interacts with EGFR; the interaction requires EGF stimulation and is increased by SHC3. Interacts with CDC42; the interaction requires constitutively active CDC42. Interacts with CTNNB1, DLG4, CDH2 and GRIN2B. Interacts with GPHN. Isoform 2 is phosphorylated on multiple tyrosine residues by FYN. Phosphorylated tyrosine residues undergo dephosphorylation after stimulation of NMDA receptors. Phosphorylated in vitro by CaMK2 in the presence of calmodulin and calcium; which inhibits GAP activity. As to expression, isoform 1 and isoform 2 are highly expressed in brain, specially in cortex, corpus striatum, hippocampus and thalamus. Low levels in cerebellum, colon, small intestine, and kidney.

It localises to the postsynaptic density. It is found in the cell projection. Its subcellular location is the dendritic spine. The protein resides in the cytoplasm. The protein localises to the cell cortex. It localises to the endosome membrane. It is found in the golgi apparatus membrane. Its subcellular location is the endoplasmic reticulum membrane. The protein resides in the membrane. Its function is as follows. GTPase-activating protein (GAP) promoting GTP hydrolysis on RHOA, CDC42 and RAC1 small GTPases. May be involved in the differentiation of neuronal cells during the formation of neurite extensions. Involved in NMDA receptor activity-dependent actin reorganization in dendritic spines. May mediate cross-talks between Ras- and Rho-regulated signaling pathways in cell growth regulation. Isoform 2 has higher GAP activity. The sequence is that of Rho GTPase-activating protein 32 (Arhgap32) from Mus musculus (Mouse).